A 185-amino-acid chain; its full sequence is Threonylcarbamoyl-AMP synthase (185 aa).

In terms of domain architecture, YrdC-like spans 4–185 (SFRVQQAARE…LATGEVVRPG (182 aa)).

It belongs to the SUA5 family. TsaC subfamily.

Its subcellular location is the cytoplasm. The catalysed reaction is L-threonine + hydrogencarbonate + ATP = L-threonylcarbamoyladenylate + diphosphate + H2O. In terms of biological role, required for the formation of a threonylcarbamoyl group on adenosine at position 37 (t(6)A37) in tRNAs that read codons beginning with adenine. Catalyzes the conversion of L-threonine, HCO(3)(-)/CO(2) and ATP to give threonylcarbamoyl-AMP (TC-AMP) as the acyladenylate intermediate, with the release of diphosphate. The polypeptide is Threonylcarbamoyl-AMP synthase (Pseudomonas putida (strain ATCC 700007 / DSM 6899 / JCM 31910 / BCRC 17059 / LMG 24140 / F1)).